Here is a 165-residue protein sequence, read N- to C-terminus: Probable chemoreceptor glutamine deamidase CheD (165 aa).

The protein belongs to the CheD family.

It catalyses the reaction L-glutaminyl-[protein] + H2O = L-glutamyl-[protein] + NH4(+). In terms of biological role, probably deamidates glutamine residues to glutamate on methyl-accepting chemotaxis receptors (MCPs), playing an important role in chemotaxis. The sequence is that of Probable chemoreceptor glutamine deamidase CheD from Symbiobacterium thermophilum (strain DSM 24528 / JCM 14929 / IAM 14863 / T).